Reading from the N-terminus, the 289-residue chain is Thymidylate synthase (289 aa).

Residues Arg26 and 151 to 152 (RR) contribute to the dUMP site. Catalysis depends on Cys171, which acts as the Nucleophile. DUMP-binding positions include 191 to 194 (RSGD), Asn202, and 232 to 234 (HVY). Asp194 provides a ligand contact to (6R)-5,10-methylene-5,6,7,8-tetrahydrofolate. Residue Ala288 coordinates (6R)-5,10-methylene-5,6,7,8-tetrahydrofolate.

It belongs to the thymidylate synthase family. As to quaternary structure, homodimer.

The enzyme catalyses dUMP + (6R)-5,10-methylene-5,6,7,8-tetrahydrofolate = 7,8-dihydrofolate + dTMP. It functions in the pathway pyrimidine metabolism; dTTP biosynthesis. The polypeptide is Thymidylate synthase (Equus caballus (Horse)).